The chain runs to 419 residues: Hyaluronidase-3 (419 aa).

An N-terminal signal peptide occupies residues 1–16 (MTMQLGLALVLGVAMC). 5 disulfide bridges follow: C42-C331, C205-C220, C356-C367, C361-C395, and C397-C406. A glycan (N-linked (GlcNAc...) asparagine) is linked at N69. E129 acts as the Proton donor in catalysis. N215 carries an N-linked (GlcNAc...) asparagine glycan. In terms of domain architecture, EGF-like spans 352-407 (AAMACSHQRCHGHGRCAWQDPGQLKVFLHLHPGGSPGAWESFSCRCYWGWAGPTCQ).

The protein belongs to the glycosyl hydrolase 56 family. N-glycosylated. In terms of tissue distribution, highly expressed in bladder, spleen and liver. Expressed at low levels in the kidney.

The protein localises to the secreted. It is found in the cell membrane. Its subcellular location is the cytoplasmic vesicle. The protein resides in the secretory vesicle. It localises to the acrosome. The protein localises to the endoplasmic reticulum. It is found in the early endosome. It carries out the reaction Random hydrolysis of (1-&gt;4)-linkages between N-acetyl-beta-D-glucosamine and D-glucuronate residues in hyaluronate.. Its function is as follows. Facilitates sperm penetration into the layer of cumulus cells surrounding the egg by digesting hyaluronic acid. Involved in induction of the acrosome reaction in the sperm. Involved in follicular atresia, the breakdown of immature ovarian follicles that are not selected to ovulate. Induces ovarian granulosa cell apoptosis, possibly via apoptotic signaling pathway involving CASP8 and CASP3 activation, and poly(ADP-ribose) polymerase (PARP) cleavage. Has no hyaluronidase activity in embryonic fibroblasts in vitro. Has no hyaluronidase activity in granulosa cells in vitro. The sequence is that of Hyaluronidase-3 (HYAL3) from Sus scrofa (Pig).